The primary structure comprises 78 residues: Large ribosomal subunit protein bL28 (78 aa).

This sequence belongs to the bacterial ribosomal protein bL28 family.

The sequence is that of Large ribosomal subunit protein bL28 from Synechococcus sp. (strain WH7803).